The primary structure comprises 232 residues: uncharacterized protein (232 aa).

A coiled-coil region spans residues 89–140 (EFGTWQRRKNSLEDSLREVMKRRGELQDQLTAELGAIERMQTDLVGARQTLD).

This is an uncharacterized protein from Mycobacterium leprae (strain TN).